The chain runs to 99 residues: Integration host factor subunit alpha (99 aa).

Residues 49-75 are disordered; that stretch reads FGNFDLRDKNQRPGRNPKTGEDIPITA.

The protein belongs to the bacterial histone-like protein family. As to quaternary structure, heterodimer of an alpha and a beta chain.

In terms of biological role, this protein is one of the two subunits of integration host factor, a specific DNA-binding protein that functions in genetic recombination as well as in transcriptional and translational control. This Salmonella arizonae (strain ATCC BAA-731 / CDC346-86 / RSK2980) protein is Integration host factor subunit alpha.